The following is a 158-amino-acid chain: Small ribosomal subunit protein uS9 (158 aa).

Positions 1 to 10 (MSDTMQSLDQ) are enriched in polar residues. Residues 1–35 (MSDTMQSLDQLSALKTAAPDAPKREKKVDKQGRAY) form a disordered region. Basic and acidic residues predominate over residues 21-32 (APKREKKVDKQG).

The protein belongs to the universal ribosomal protein uS9 family.

The polypeptide is Small ribosomal subunit protein uS9 (Afipia carboxidovorans (strain ATCC 49405 / DSM 1227 / KCTC 32145 / OM5) (Oligotropha carboxidovorans)).